Here is an 80-residue protein sequence, read N- to C-terminus: 17 kDa surface antigen (80 aa).

A compositionally biased stretch (polar residues) spans 47-58 (ALETTPSGTSIE). The disordered stretch occupies residues 47-80 (ALETTPSGTSIEWRNPDNGNYGYVTPSKTYKNST).

It belongs to the rickettsiale 17 kDa surface antigen family.

It is found in the cell outer membrane. This Rickettsia canadensis protein is 17 kDa surface antigen (omp).